A 67-amino-acid chain; its full sequence is Sec-independent protein translocase protein TatA (67 aa).

A helical membrane pass occupies residues 1–21; sequence MGSFSLTHWIIVLIIVVLIFG. Positions 43-67 are disordered; sequence LNEGTDGKEAQKDDVIEHKKDEDKA. Residues 47–67 are compositionally biased toward basic and acidic residues; the sequence is TDGKEAQKDDVIEHKKDEDKA.

Belongs to the TatA/E family. In terms of assembly, the Tat system comprises two distinct complexes: a TatABC complex, containing multiple copies of TatA, TatB and TatC subunits, and a separate TatA complex, containing only TatA subunits. Substrates initially bind to the TatABC complex, which probably triggers association of the separate TatA complex to form the active translocon.

Its subcellular location is the cell inner membrane. Functionally, part of the twin-arginine translocation (Tat) system that transports large folded proteins containing a characteristic twin-arginine motif in their signal peptide across membranes. TatA could form the protein-conducting channel of the Tat system. The chain is Sec-independent protein translocase protein TatA from Neisseria gonorrhoeae (strain ATCC 700825 / FA 1090).